Here is an 86-residue protein sequence, read N- to C-terminus: RNA-binding protein Hfq (86 aa).

The Sm domain maps to 10–71 (DLFLNNARKE…VSTIQPGKYI (62 aa)).

The protein belongs to the Hfq family. As to quaternary structure, homohexamer.

Its function is as follows. RNA chaperone that binds small regulatory RNA (sRNAs) and mRNAs to facilitate mRNA translational regulation in response to envelope stress, environmental stress and changes in metabolite concentrations. Also binds with high specificity to tRNAs. This is RNA-binding protein Hfq from Clostridioides difficile (strain 630) (Peptoclostridium difficile).